We begin with the raw amino-acid sequence, 227 residues long: MKRSAINDILGHTRQFFSQHDVHLPPFASFSPAQWQQLDTAAWEEVFDLKLGWDVTAFGRNNFAAHGLTLFTLRNGSAKGMPYVKCYAEKIMHVRDAQVTPMHFHWRKREDIINRGGGNLIVELWNADSNEQTADSDITVVIDGCRQKHTAGSQLRLSPGESICLPPGLYHSFWAEAGFGDVLVGEVSSVNDDDHDNHFLQPLDRYNLIDEDEPAQLVLCNEYRQFR.

D-fructose is bound by residues Lys-90, His-103–Glu-110, His-171, Glu-186, and Asp-193. 4 residues coordinate Mn(2+): His-103, His-105, Glu-110, and His-171.

The protein belongs to the D-lyxose ketol-isomerase family. In terms of assembly, homodimer; disulfide-linked. Dimerization is facilitated through a disulfide bond between the two monomers of the dimeric enzyme. Mn(2+) serves as cofactor.

It catalyses the reaction D-lyxose = D-xylulose. The catalysed reaction is D-mannose = D-fructose. Sugar isomerase that catalyzes the reversible isomerization of D-lyxose to D-xylulose, and D-mannose to D-fructose. Shows similar activity toward D-lyxose and D-mannose with a turnover and catalytic efficiency for D-lyxose as a substrate only 1.1- and 1.3-fold higher than those for D-mannose, respectively. Shows weaker activity with L-gulose, D-talose, L-ribose and L-allose. Overexpression enables cell growth on the rare pentose D-lyxose as the sole carbon source. The sequence is that of D-lyxose/D-mannose isomerase from Escherichia coli O157:H7.